Here is a 269-residue protein sequence, read N- to C-terminus: GATA transcription factor 3 (269 aa).

A Nuclear localization signal motif is present at residues 136–143 (KPRTKRSR). Residues 176–230 (LVFQRRCSHCGTNNTPQWRTGPVGPKTLCNACGVRFKSGRLCPEYRPADSPTFSN) form a GATA-type zinc finger. Residues 245–269 (KSKELGEETGEASTKSDPVKFGSKW) form a disordered region.

It belongs to the type IV zinc-finger family. Class A subfamily. As to expression, mostly expressed in roots. Also expressed in stems, flowers and leaves.

It is found in the nucleus. Transcriptional activator that specifically binds 5'-GATA-3' or 5'-GAT-3' motifs within gene promoters. May be involved in the regulation of some light-responsive genes. In Arabidopsis thaliana (Mouse-ear cress), this protein is GATA transcription factor 3 (GATA3).